The chain runs to 318 residues: MATVPLFTQFPCKTLNPSSSNTKHQSKSPILLPINSINRRSEIGVSVHRPDFKIRATDIDDEWGQDGVERVFASSSTVSVADKAIESVEETERLKRSLADSLYGTDRGLSVSSDTRAEISELITQLESKNPTPAPNEALFLLNGKWILAYTSFVGLFPLLSRRIEPLVKVDEISQTIDSDSFTVQNSVRFAGPFSTTSFSTNAKFEIRSPKRVQIKFEQGVIGTPQLTDSIEIPESVEVLGQKIDLNPIKGLLTSVQDTASSVARTISNQPPLKFSLPSDNTQSWLLTTYLDKDLRISRGDGGSVYVLIKEGSSLLNP.

A chloroplast-targeting transit peptide spans 1–55 (MATVPLFTQFPCKTLNPSSSNTKHQSKSPILLPINSINRRSEIGVSVHRPDFKIR). Position 57 is a phosphothreonine (threonine 57).

Belongs to the PAP/fibrillin family. Interacts (via N-terminus) with ABI2. As to expression, expressed in flower buds. Detected in tapetal cells, endothecium and connective in anthers and in subepidermal cells in filaments.

The protein localises to the plastid. It is found in the chloroplast. It localises to the plastoglobule. The protein resides in the chloroplast thylakoid. Its function is as follows. Probably involved in light/cold stress-related jasmonate (JA) biosynthesis. Contributes to the protection of photosystem II (PSII) against light stress. The protein is Probable plastid-lipid-associated protein 1, chloroplastic (PAP1) of Arabidopsis thaliana (Mouse-ear cress).